A 368-amino-acid chain; its full sequence is Methionine import ATP-binding protein MetN (368 aa).

Residues 5–260 (IELNNLSVQF…PKEALTKQFI (256 aa)) form the ABC transporter domain. Position 41–48 (41–48 (GYSGAGKS)) interacts with ATP.

It belongs to the ABC transporter superfamily. Methionine importer (TC 3.A.1.24) family. As to quaternary structure, the complex is composed of two ATP-binding proteins (MetN), two transmembrane proteins (MetI) and a solute-binding protein (MetQ).

Its subcellular location is the cell membrane. The enzyme catalyses L-methionine(out) + ATP + H2O = L-methionine(in) + ADP + phosphate + H(+). It catalyses the reaction D-methionine(out) + ATP + H2O = D-methionine(in) + ADP + phosphate + H(+). Part of the ABC transporter complex MetNIQ involved in methionine import. Responsible for energy coupling to the transport system. This Lactococcus lactis subsp. lactis (strain IL1403) (Streptococcus lactis) protein is Methionine import ATP-binding protein MetN.